The following is a 72-amino-acid chain: Translation initiation factor IF-1 (72 aa).

An S1-like domain is found at 1–72 (MAKEEPIEVE…TRGRIIYRTK (72 aa)).

This sequence belongs to the IF-1 family. Component of the 30S ribosomal translation pre-initiation complex which assembles on the 30S ribosome in the order IF-2 and IF-3, IF-1 and N-formylmethionyl-tRNA(fMet); mRNA recruitment can occur at any time during PIC assembly.

The protein resides in the cytoplasm. Functionally, one of the essential components for the initiation of protein synthesis. Stabilizes the binding of IF-2 and IF-3 on the 30S subunit to which N-formylmethionyl-tRNA(fMet) subsequently binds. Helps modulate mRNA selection, yielding the 30S pre-initiation complex (PIC). Upon addition of the 50S ribosomal subunit IF-1, IF-2 and IF-3 are released leaving the mature 70S translation initiation complex. This Syntrophus aciditrophicus (strain SB) protein is Translation initiation factor IF-1.